The chain runs to 187 residues: Ribosome-recycling factor (187 aa).

Belongs to the RRF family.

It is found in the cytoplasm. Responsible for the release of ribosomes from messenger RNA at the termination of protein biosynthesis. May increase the efficiency of translation by recycling ribosomes from one round of translation to another. This Rhodopseudomonas palustris (strain BisB5) protein is Ribosome-recycling factor.